Here is a 275-residue protein sequence, read N- to C-terminus: Large ribosomal subunit protein uL2c (275 aa).

The interval 225–259 (KNPVDHPHGGGEGRAPIGRSTPVTPWGKPALGRRT) is disordered.

Belongs to the universal ribosomal protein uL2 family. As to quaternary structure, part of the 50S ribosomal subunit.

Its subcellular location is the plastid. It localises to the cyanelle. This chain is Large ribosomal subunit protein uL2c (rpl2), found in Cyanophora paradoxa.